We begin with the raw amino-acid sequence, 89 residues long: Protein FAM25A (89 aa).

This sequence belongs to the FAM25 family.

This is Protein FAM25A from Homo sapiens (Human).